A 550-amino-acid chain; its full sequence is MAFNDLLQQVGGVGRFQQIQVTLVVLPLLLMASHNTVQNFTAAIPTHHCRPPANANLSKDGGLEAWLPRDRQGQPESCLRFTSPQWGPPFPNGTEANGTGATEPCTDGWIYDNSTFPSTIVTEWDLVCSHRALRQLAQSLYMVGVLLGAMVFGYLADRLGRRKVLILNYLQTAVSGTCAAFAPNFPIYCAFRLLSGMSLAGIALNCMTLNVEWMPIHTRACVGTLIGYVYSLGQFLLAGVAYAVPHWRHLQLLISVPFFAFFIYSWFFIESARWHSSSGRLDLTLRALQRVARINGKREEGAKLSMEVLRASLQKELTMGKGQASAMELLRCPTLRHLFLCLSMLWFATSFAYYGLVMDLQGFGVSIYLIQVIFGAVDLPAKLVGFLVINSLGRRPAQMAALLLAGICILLNGVVPQDQSVIRTSLAVLGKGCLAASFNCIFLYTGELYPTMIRQTGLGMGSTMARVGSIVSPLVSMTTELYPSVPLFIYGAVPVAASAVTVLLPETLGQPLPDTVQDLESRKGKQTPQQQEHQKYMVPLQASAQEKNGL.

Residues 1–9 (MAFNDLLQQ) are Cytoplasmic-facing. Residues 10 to 30 (VGGVGRFQQIQVTLVVLPLLL) traverse the membrane as a helical segment. At 31–135 (MASHNTVQNF…LVCSHRALRQ (105 aa)) the chain is on the extracellular side. Residues asparagine 56, asparagine 92, and asparagine 113 are each glycosylated (N-linked (GlcNAc...) asparagine). The helical transmembrane segment at 136–156 (LAQSLYMVGVLLGAMVFGYLA) threads the bilayer. Topologically, residues 157-164 (DRLGRRKV) are cytoplasmic. Residues 165–187 (LILNYLQTAVSGTCAAFAPNFPI) form a helical membrane-spanning segment. At 188–190 (YCA) the chain is on the extracellular side. A helical membrane pass occupies residues 191–213 (FRLLSGMSLAGIALNCMTLNVEW). Residues 214 to 224 (MPIHTRACVGT) lie on the Cytoplasmic side of the membrane. The chain crosses the membrane as a helical span at residues 225–245 (LIGYVYSLGQFLLAGVAYAVP). Residues 246–248 (HWR) are Extracellular-facing. Residues 249-269 (HLQLLISVPFFAFFIYSWFFI) form a helical membrane-spanning segment. The Cytoplasmic portion of the chain corresponds to 270 to 337 (ESARWHSSSG…ELLRCPTLRH (68 aa)). A helical transmembrane segment spans residues 338–358 (LFLCLSMLWFATSFAYYGLVM). Over 359-368 (DLQGFGVSIY) the chain is Extracellular. A helical membrane pass occupies residues 369–389 (LIQVIFGAVDLPAKLVGFLVI). Over 390–395 (NSLGRR) the chain is Cytoplasmic. Residues 396–416 (PAQMAALLLAGICILLNGVVP) form a helical membrane-spanning segment. The Extracellular portion of the chain corresponds to 417-425 (QDQSVIRTS). Residues 426–446 (LAVLGKGCLAASFNCIFLYTG) form a helical membrane-spanning segment. The Cytoplasmic segment spans residues 447 to 456 (ELYPTMIRQT). A helical transmembrane segment spans residues 457-477 (GLGMGSTMARVGSIVSPLVSM). The Extracellular portion of the chain corresponds to 478–484 (TTELYPS). The chain crosses the membrane as a helical span at residues 485–505 (VPLFIYGAVPVAASAVTVLLP). The Cytoplasmic portion of the chain corresponds to 506 to 550 (ETLGQPLPDTVQDLESRKGKQTPQQQEHQKYMVPLQASAQEKNGL). Residues 513–550 (PDTVQDLESRKGKQTPQQQEHQKYMVPLQASAQEKNGL) are disordered.

It belongs to the major facilitator (TC 2.A.1) superfamily. Organic cation transporter (TC 2.A.1.19) family. Glycosylated. Glycosylation is necessary for proper targeting of the transporter to the plasma membrane. Expressed in kidney; in the basolateral membrane of the proximal tubule.

It localises to the basolateral cell membrane. It is found in the basal cell membrane. It catalyses the reaction (6R)-L-erythro-5,6,7,8-tetrahydrobiopterin(out) + a dicarboxylate(in) = (6R)-L-erythro-5,6,7,8-tetrahydrobiopterin(in) + a dicarboxylate(out). It carries out the reaction L-erythro-7,8-dihydrobiopterin(out) + a dicarboxylate(in) = L-erythro-7,8-dihydrobiopterin(in) + a dicarboxylate(out). The enzyme catalyses L-sepiapterin(out) + a dicarboxylate(in) = L-sepiapterin(in) + a dicarboxylate(out). The catalysed reaction is prostaglandin F2alpha(out) + a dicarboxylate(in) = prostaglandin F2alpha(in) + a dicarboxylate(out). It catalyses the reaction prostaglandin E2(out) + a dicarboxylate(in) = prostaglandin E2(in) + a dicarboxylate(out). It carries out the reaction 3',5'-cyclic AMP(out) + a dicarboxylate(in) = 3',5'-cyclic AMP(in) + a dicarboxylate(out). The enzyme catalyses 3',5'-cyclic GMP(out) + a dicarboxylate(in) = 3',5'-cyclic GMP(in) + a dicarboxylate(out). The catalysed reaction is urate(out) + a dicarboxylate(in) = urate(in) + a dicarboxylate(out). It catalyses the reaction kynurenate(out) + glutarate(in) = kynurenate(in) + glutarate(out). It carries out the reaction (indol-3-yl)acetate(out) + a dicarboxylate(in) = (indol-3-yl)acetate(in) + a dicarboxylate(out). The enzyme catalyses indoxyl sulfate(out) + a dicarboxylate(in) = indoxyl sulfate(in) + a dicarboxylate(out). The catalysed reaction is N-benzoylglycine(out) + a dicarboxylate(in) = N-benzoylglycine(in) + a dicarboxylate(out). It catalyses the reaction 3-carboxy-4-methyl-5-propyl-2-furanpropanoate(out) + a dicarboxylate(in) = 3-carboxy-4-methyl-5-propyl-2-furanpropanoate(in) + a dicarboxylate(out). In terms of biological role, secondary active transporter that functions as a Na(+)-independent organic anion (OA)/dicarboxylate antiporter where the uptake of one molecule of OA into the cell is coupled with an efflux of one molecule of intracellular dicarboxylate such as 2-oxoglutarate or glutarate. Mediates the uptake of OA across the basolateral side of proximal tubule epithelial cells, thereby contributing to the renal elimination of endogenous OA from the systemic circulation into the urine. Functions as a biopterin transporters involved in the uptake and the secretion of coenzymes tetrahydrobiopterin (BH4), dihydrobiopterin (BH2) and sepiapterin to urine, thereby determining baseline levels of blood biopterins. Transports prostaglandin E2 (PGE2) and prostaglandin F2-alpha (PGF2-alpha) and may contribute to their renal excretion. Also mediates the uptake of cyclic nucleotides such as cAMP and cGMP. Involved in the transport of neuroactive tryptophan metabolites kynurenate (KYNA) and xanthurenate (XA) and may contribute to their secretion from the brain. May transport glutamate. Also involved in the disposition of uremic toxins and potentially toxic xenobiotics by the renal organic anion secretory pathway, helping reduce their undesired toxicological effects on the body. Uremic toxins include the indoxyl sulfate (IS), hippurate/N-benzoylglycine (HA), indole acetate (IA), 3-carboxy-4- methyl-5-propyl-2-furanpropionate (CMPF) and urate. Xenobiotics include the mycotoxin ochratoxin (OTA). May also contribute to the transport of organic compounds in testes across the blood-testis-barrier. The sequence is that of Solute carrier family 22 member 6 from Macaca fascicularis (Crab-eating macaque).